The following is a 233-amino-acid chain: uncharacterized protein (233 aa).

The the nascent chain stimulates ribosomal stalling during translation by interfering with the conformation of the peptidyl transferase center (PTC), and the translating mRNA by adopting a difficult-to-decode structure at the ribosome decoding center stretch occupies residues 196–212 (FFYEDYLIFDCRAKRRK).

Acts as an endogenous target of the ribosome quality control (RQC) pathway. During translation, the nascent chain has a propensity to stall ribosomes, thereby stimulating activation of the RQC pathway. This is an uncharacterized protein from Saccharomyces cerevisiae (strain ATCC 204508 / S288c) (Baker's yeast).